Reading from the N-terminus, the 526-residue chain is GMP synthase [glutamine-hydrolyzing] (526 aa).

A Glutamine amidotransferase type-1 domain is found at 8–208; the sequence is CILIIDFGSQ…AVDICRCEVT (201 aa). Residue Cys-85 is the Nucleophile of the active site. Catalysis depends on residues His-182 and Glu-184. In terms of domain architecture, GMPS ATP-PPase spans 209–401; the sequence is WKPVYIVKNI…LGLPLNVVNQ (193 aa). 236 to 242 lines the ATP pocket; sequence SGGIDSL.

Homodimer.

The enzyme catalyses XMP + L-glutamine + ATP + H2O = GMP + L-glutamate + AMP + diphosphate + 2 H(+). It functions in the pathway purine metabolism; GMP biosynthesis; GMP from XMP (L-Gln route): step 1/1. In terms of biological role, catalyzes the synthesis of GMP from XMP. This chain is GMP synthase [glutamine-hydrolyzing], found in Blochmanniella floridana.